We begin with the raw amino-acid sequence, 545 residues long: Zinc finger protein with KRAB and SCAN domains 4 (545 aa).

Positions 1-22 are disordered; the sequence is MAREPRKNAALDAQSAEDQTGL. Glycyl lysine isopeptide (Lys-Gly) (interchain with G-Cter in SUMO2) cross-links involve residues K26 and K29. The interval 34–55 is disordered; it reads ALTAEVRAPCSPARGPERSRQR. The 83-residue stretch at 53–135 folds into the SCAN box domain; it reads RQRFRGFRYP…VLLEYLERQL (83 aa). Residues K178 and K222 each participate in a glycyl lysine isopeptide (Lys-Gly) (interchain with G-Cter in SUMO2) cross-link. A KRAB domain is found at 221 to 317; it reads LKMEDVALTL…QRKQKNAIGS (97 aa). 5 C2H2-type zinc fingers span residues 320-342, 348-370, 376-398, 404-426, and 432-454; these read HYCH…RRIH, YECE…QRVH, YECE…QRTH, YECD…HKIH, and YQCN…QRIH. Over residues 455–467 the composition is skewed to basic and acidic residues; that stretch reads GDKNVQNPEHGES. Residues 455–480 are disordered; the sequence is GDKNVQNPEHGESWESQGRTESQWEN. A compositionally biased stretch (polar residues) spans 468–480; that stretch reads WESQGRTESQWEN. C2H2-type zinc fingers lie at residues 487-509 and 515-537; these read YKCN…QKIH and YQCD…QRSH.

It belongs to the krueppel C2H2-type zinc-finger protein family. As to expression, expressed in adult heart, brain, placenta, lung and kidney, but not in adult liver and skeletal muscle. In 17-day old embryo, detected in liver, skeletal muscle, brain, heart and small intestine.

The protein resides in the nucleus. Functionally, may be involved in the transcriptional activation of MDM2 and EP300 genes. The chain is Zinc finger protein with KRAB and SCAN domains 4 (ZKSCAN4) from Homo sapiens (Human).